We begin with the raw amino-acid sequence, 431 residues long: Histidine--tRNA ligase (431 aa).

This sequence belongs to the class-II aminoacyl-tRNA synthetase family. As to quaternary structure, homodimer.

Its subcellular location is the cytoplasm. It carries out the reaction tRNA(His) + L-histidine + ATP = L-histidyl-tRNA(His) + AMP + diphosphate + H(+). This Levilactobacillus brevis (strain ATCC 367 / BCRC 12310 / CIP 105137 / JCM 1170 / LMG 11437 / NCIMB 947 / NCTC 947) (Lactobacillus brevis) protein is Histidine--tRNA ligase.